A 360-amino-acid polypeptide reads, in one-letter code: Aminomethyltransferase (360 aa).

It belongs to the GcvT family. The glycine cleavage system is composed of four proteins: P, T, L and H.

The enzyme catalyses N(6)-[(R)-S(8)-aminomethyldihydrolipoyl]-L-lysyl-[protein] + (6S)-5,6,7,8-tetrahydrofolate = N(6)-[(R)-dihydrolipoyl]-L-lysyl-[protein] + (6R)-5,10-methylene-5,6,7,8-tetrahydrofolate + NH4(+). The glycine cleavage system catalyzes the degradation of glycine. This Methylococcus capsulatus (strain ATCC 33009 / NCIMB 11132 / Bath) protein is Aminomethyltransferase.